The primary structure comprises 473 residues: Sphingosine kinase 1 (473 aa).

The region spanning 83–233 (QCRGNLLVFI…VALYSVKTDN (151 aa)) is the DAGKc domain. Residues 93–95 (NPN) and 125–129 (TTGPN) each bind ATP. 151 to 154 (SGDG) provides a ligand contact to substrate. The Proton donor/acceptor role is filled by D153. Residues E158 and 184-186 (GSG) each bind ATP. D251 serves as a coordination point for substrate. Residues R258, R265, and 448 to 450 (DGE) contribute to the ATP site.

Mg(2+) serves as cofactor. As to expression, expressed in the majority of cholinergic and GABAergic neurons, body wall muscle, excretory canal cells, intestine, and hypodermis.

It localises to the presynaptic cell membrane. Its subcellular location is the cell projection. It is found in the axon. The protein localises to the perikaryon. The protein resides in the mitochondrion membrane. The enzyme catalyses a sphingoid base + ATP = a sphingoid 1-phosphate + ADP + H(+). It carries out the reaction 15-methylhexadecasphing-4-enine + ATP = 15-methylhexadecasphing-4-enine 1-phosphate + ADP + H(+). The catalysed reaction is 15-methylhexadecasphinganine + ATP = 15-methylhexadecasphinganine 1-phosphate + ADP + H(+). The protein operates within lipid metabolism; sphingolipid metabolism. Functionally, catalyzes the phosphorylation of sphingoid bases to form sphingoid 1-phosphate (SPP), which have both intra- and extracellular functions. C.elegans contain specific sphingoid bases, which are unique or different in structure compared to the sphingoid bases found in other animals. Two examples of these distinctive compounds are: 15-methylhexadecasphinganine and 15-methylhexadecasphing-4-enine. Required for neurotransmitter release from neuromuscular junctions. Acts by recruiting the synaptic vesicle priming protein unc-13 to synapses. This chain is Sphingosine kinase 1 (sphk-1), found in Caenorhabditis elegans.